A 122-amino-acid chain; its full sequence is Small ribosomal subunit protein uS13c (122 aa).

The segment at 102 to 122 (RTRTNARTRRGAKKTVAGKKK) is disordered.

Belongs to the universal ribosomal protein uS13 family. Part of the 30S ribosomal subunit.

It localises to the plastid. Its subcellular location is the chloroplast. Its function is as follows. Located at the top of the head of the 30S subunit, it contacts several helices of the 16S rRNA. In Guillardia theta (Cryptophyte), this protein is Small ribosomal subunit protein uS13c.